The chain runs to 379 residues: C-C chemokine receptor type 7 (379 aa).

Positions M1 to C24 are cleaved as a signal peptide. Residues Q25 to W59 are Extracellular-facing. N36 is a glycosylation site (N-linked (GlcNAc...) asparagine). A helical transmembrane segment spans residues F60–F86. The Cytoplasmic portion of the chain corresponds to K87–T95. A helical membrane pass occupies residues Y96–Y116. Over S117 to K130 the chain is Extracellular. The cysteines at positions 129 and 210 are disulfide-linked. A helical membrane pass occupies residues L131–I152. Residues D153–R170 are Cytoplasmic-facing. The chain crosses the membrane as a helical span at residues V171 to T191. Residues P192–A219 are Extracellular-facing. A helical transmembrane segment spans residues L220–I247. At R248–K263 the chain is on the cytoplasmic side. Residues V264–A289 traverse the membrane as a helical segment. Over N290 to S314 the chain is Extracellular. N-linked (GlcNAc...) asparagine glycosylation occurs at N292. A helical transmembrane segment spans residues L315–V332. At K333–P379 the chain is on the cytoplasmic side.

It belongs to the G-protein coupled receptor 1 family.

It localises to the cell membrane. Receptor for the MIP-3-beta chemokine. This is C-C chemokine receptor type 7 (CCR7) from Bos taurus (Bovine).